The primary structure comprises 158 residues: 6,7-dimethyl-8-ribityllumazine synthase (158 aa).

Residues phenylalanine 23, 61-63, and 85-87 each bind 5-amino-6-(D-ribitylamino)uracil; these read SFE and AVI. Position 90-91 (90-91) interacts with (2S)-2-hydroxy-3-oxobutyl phosphate; sequence ET. Residue histidine 93 is the Proton donor of the active site. A 5-amino-6-(D-ribitylamino)uracil-binding site is contributed by phenylalanine 118. Arginine 132 contributes to the (2S)-2-hydroxy-3-oxobutyl phosphate binding site.

Belongs to the DMRL synthase family.

It catalyses the reaction (2S)-2-hydroxy-3-oxobutyl phosphate + 5-amino-6-(D-ribitylamino)uracil = 6,7-dimethyl-8-(1-D-ribityl)lumazine + phosphate + 2 H2O + H(+). It functions in the pathway cofactor biosynthesis; riboflavin biosynthesis; riboflavin from 2-hydroxy-3-oxobutyl phosphate and 5-amino-6-(D-ribitylamino)uracil: step 1/2. Catalyzes the formation of 6,7-dimethyl-8-ribityllumazine by condensation of 5-amino-6-(D-ribitylamino)uracil with 3,4-dihydroxy-2-butanone 4-phosphate. This is the penultimate step in the biosynthesis of riboflavin. The chain is 6,7-dimethyl-8-ribityllumazine synthase from Prochlorococcus marinus (strain MIT 9312).